We begin with the raw amino-acid sequence, 104 residues long: NADH-quinone oxidoreductase subunit K (104 aa).

3 helical membrane passes run 7–27 (LSHYLTVAAILFTLGTLGIFL), 33–53 (IVILMSVELILLAVNINLVSF), and 67–87 (LLVLTVAAAEAAIGLAILVVF).

The protein belongs to the complex I subunit 4L family. In terms of assembly, NDH-1 is composed of 14 different subunits. Subunits NuoA, H, J, K, L, M, N constitute the membrane sector of the complex.

It is found in the cell inner membrane. The catalysed reaction is a quinone + NADH + 5 H(+)(in) = a quinol + NAD(+) + 4 H(+)(out). In terms of biological role, NDH-1 shuttles electrons from NADH, via FMN and iron-sulfur (Fe-S) centers, to quinones in the respiratory chain. The immediate electron acceptor for the enzyme in this species is believed to be ubiquinone. Couples the redox reaction to proton translocation (for every two electrons transferred, four hydrogen ions are translocated across the cytoplasmic membrane), and thus conserves the redox energy in a proton gradient. The protein is NADH-quinone oxidoreductase subunit K of Xanthobacter autotrophicus (strain ATCC BAA-1158 / Py2).